Consider the following 200-residue polypeptide: ATP synthase subunit s, mitochondrial (200 aa).

Residues 1 to 25 constitute a mitochondrion transit peptide; sequence MMMFGKISRQLFSLKKIPWSCDSRY. The interval 1 to 61 is N-terminal domain; that stretch reads MMMFGKISRQ…SEWLLRCGAK (61 aa). Gly-59 lines the Mg(2+) pocket. LRR repeat units lie at residues 62-87, 88-116, 117-141, and 142-173; these read VRYC…RYKI, QAID…RITL, CRCH…KSLL, and ELEI…LSDL. Thr-93 contacts Mg(2+).

The protein belongs to the ATP synthase subunit s family. As to quaternary structure, homotetramer. Associates with ATP synthase.

The protein localises to the mitochondrion. Its subcellular location is the mitochondrion inner membrane. Functionally, involved in regulation of mitochondrial membrane ATP synthase. Necessary for H(+) conduction of ATP synthase. Facilitates energy-driven catalysis of ATP synthesis by blocking a proton leak through an alternative proton exit pathway. This Rattus norvegicus (Rat) protein is ATP synthase subunit s, mitochondrial.